A 423-amino-acid chain; its full sequence is Gamma-glutamyl phosphate reductase (423 aa).

Belongs to the gamma-glutamyl phosphate reductase family.

It localises to the cytoplasm. It catalyses the reaction L-glutamate 5-semialdehyde + phosphate + NADP(+) = L-glutamyl 5-phosphate + NADPH + H(+). The protein operates within amino-acid biosynthesis; L-proline biosynthesis; L-glutamate 5-semialdehyde from L-glutamate: step 2/2. Catalyzes the NADPH-dependent reduction of L-glutamate 5-phosphate into L-glutamate 5-semialdehyde and phosphate. The product spontaneously undergoes cyclization to form 1-pyrroline-5-carboxylate. The chain is Gamma-glutamyl phosphate reductase from Burkholderia ambifaria (strain MC40-6).